The following is a 142-amino-acid chain: Large-conductance mechanosensitive channel (142 aa).

3 helical membrane-spanning segments follow: residues Val-14–Leu-34, Val-38–Pro-58, and Gly-82–Ile-102.

Belongs to the MscL family. In terms of assembly, homopentamer.

The protein resides in the cell inner membrane. In terms of biological role, channel that opens in response to stretch forces in the membrane lipid bilayer. May participate in the regulation of osmotic pressure changes within the cell. The polypeptide is Large-conductance mechanosensitive channel (Methylorubrum populi (strain ATCC BAA-705 / NCIMB 13946 / BJ001) (Methylobacterium populi)).